Here is a 376-residue protein sequence, read N- to C-terminus: T-box transcription factor 18 (376 aa).

Residues 38-63 (STSRPSSSSPPSLPAVSSELLSSSFP) are compositionally biased toward low complexity. The tract at residues 38–76 (STSRPSSSSPPSLPAVSSELLSSSFPTNAPESSSRDLAP) is disordered. The segment at residues 171 to 364 (LANQEQWAKF…GNKYCRTDRK (194 aa)) is a DNA-binding region (T-box).

The protein resides in the nucleus. Its function is as follows. Transcriptional regulator involved in developmental processes. Directly binds to the promoter region of the sex-determining factor xol-1 to activate its transcription. Its activation of xol-1 transcription controls sex determination and X chromosome dosage compensation to promote male development. Has a role in the fox-1-sex-1-mediated determination of sexual fate. The polypeptide is T-box transcription factor 18 (Caenorhabditis elegans).